The chain runs to 874 residues: Eukaryotic translation initiation factor 3 subunit C (874 aa).

Positions 1–70 are disordered; the sequence is MSRFFVSGYT…DGRPSGPAYF (70 aa). A compositionally biased stretch (acidic residues) spans 14 to 61; that stretch reads SSEEEDLLSTSEEELLSSSDEGEDNESDSSFFGEDDDESEESSSDDED. The region spanning 598–774 is the PCI domain; that stretch reads FHQHINLELL…KFISFTSTTE (177 aa). Residues 797 to 874 form a disordered region; that stretch reads KNEKTQSNGY…SNNDEFQATA (78 aa). Over residues 813–848 the composition is skewed to low complexity; that stretch reads KDQQNQQQQNQNQNQQQQQNQQQQQQQQSSQQQSNN. The span at 862-874 shows a compositional bias: polar residues; sequence NVNSNNDEFQATA.

It belongs to the eIF-3 subunit C family. In terms of assembly, component of the eukaryotic translation initiation factor 3 (eIF-3) complex.

The protein resides in the cytoplasm. In terms of biological role, component of the eukaryotic translation initiation factor 3 (eIF-3) complex, which is involved in protein synthesis of a specialized repertoire of mRNAs and, together with other initiation factors, stimulates binding of mRNA and methionyl-tRNAi to the 40S ribosome. The eIF-3 complex specifically targets and initiates translation of a subset of mRNAs involved in cell proliferation. The chain is Eukaryotic translation initiation factor 3 subunit C from Candida albicans (strain SC5314 / ATCC MYA-2876) (Yeast).